The following is a 367-amino-acid chain: DNA replication and repair protein RecF (367 aa).

30–37 (GNNGEGKT) is an ATP binding site.

Belongs to the RecF family.

The protein resides in the cytoplasm. In terms of biological role, the RecF protein is involved in DNA metabolism; it is required for DNA replication and normal SOS inducibility. RecF binds preferentially to single-stranded, linear DNA. It also seems to bind ATP. This Leptospira biflexa serovar Patoc (strain Patoc 1 / Ames) protein is DNA replication and repair protein RecF.